Reading from the N-terminus, the 347-residue chain is Sensor protein VraS (347 aa).

2 consecutive transmembrane segments (helical) span residues 13-33 (ILVYSMLAAFLFIDKVFVNII) and 43-63 (IFGIPVFLFLNLIIILLCIIV). Positions 150–341 (RLARELHDSV…RIEVKAPLNK (192 aa)) constitute a Histidine kinase domain. His156 is subject to Phosphohistidine.

Post-translationally, autophosphorylated on His-156.

It localises to the cell membrane. The catalysed reaction is ATP + protein L-histidine = ADP + protein N-phospho-L-histidine.. Its function is as follows. Member of the two-component regulatory system PprA/PprB involved in biofilm formation by controlling the expression of many related genes including type IVb pili major subunit flp pilin, adhesin bapA or cupE fimbriae. Also modulates quorum-sensing signal production acting on both negative and positive modulators. Functions as a heme sensor histidine kinase which is autophosphorylated at a histidine residue and transfers its phosphate group to PprB. This is Sensor protein VraS (vraS) from Staphylococcus aureus (strain Mu3 / ATCC 700698).